We begin with the raw amino-acid sequence, 149 residues long: Large ribosomal subunit protein uL13 (149 aa).

Belongs to the universal ribosomal protein uL13 family. Part of the 50S ribosomal subunit.

Functionally, this protein is one of the early assembly proteins of the 50S ribosomal subunit, although it is not seen to bind rRNA by itself. It is important during the early stages of 50S assembly. The sequence is that of Large ribosomal subunit protein uL13 from Thermotoga maritima (strain ATCC 43589 / DSM 3109 / JCM 10099 / NBRC 100826 / MSB8).